Reading from the N-terminus, the 224-residue chain is IAP-like protein p27 (224 aa).

The stretch at V29 to M92 is one BIR repeat. The Zn(2+) site is built by C62, C65, H82, and C89.

Functionally, not essential for growth or virulence. Does not have antiapoptotic function. In Ornithodoros (relapsing fever ticks), this protein is IAP-like protein p27 (p27).